Consider the following 203-residue polypeptide: Holliday junction branch migration complex subunit RuvA (203 aa).

The interval 1-64 is domain I; sequence MIGRLRGIIL…EDAQLLYGFN (64 aa). The domain II stretch occupies residues 65–142; sequence NKQERTLFKE…KGLHGDLFTP (78 aa). A flexible linker region spans residues 143-154; the sequence is AVDLVLTSPASP. The interval 155 to 203 is domain III; sequence TSEDAEQEAVAALVALGYKPQEASRMVNKIARPDASSETLIRDALRAAL.

Belongs to the RuvA family. Homotetramer. Forms an RuvA(8)-RuvB(12)-Holliday junction (HJ) complex. HJ DNA is sandwiched between 2 RuvA tetramers; dsDNA enters through RuvA and exits via RuvB. An RuvB hexamer assembles on each DNA strand where it exits the tetramer. Each RuvB hexamer is contacted by two RuvA subunits (via domain III) on 2 adjacent RuvB subunits; this complex drives branch migration. In the full resolvosome a probable DNA-RuvA(4)-RuvB(12)-RuvC(2) complex forms which resolves the HJ.

The protein localises to the cytoplasm. The RuvA-RuvB-RuvC complex processes Holliday junction (HJ) DNA during genetic recombination and DNA repair, while the RuvA-RuvB complex plays an important role in the rescue of blocked DNA replication forks via replication fork reversal (RFR). RuvA specifically binds to HJ cruciform DNA, conferring on it an open structure. The RuvB hexamer acts as an ATP-dependent pump, pulling dsDNA into and through the RuvAB complex. HJ branch migration allows RuvC to scan DNA until it finds its consensus sequence, where it cleaves and resolves the cruciform DNA. This chain is Holliday junction branch migration complex subunit RuvA, found in Salmonella choleraesuis (strain SC-B67).